The chain runs to 537 residues: Membrane protein insertase YidC (537 aa).

The next 4 membrane-spanning stretches (helical) occupy residues 5 to 25 (LIIA…IFPT), 353 to 373 (GNYG…FFPL), 418 to 438 (VNPL…FGLY), and 495 to 515 (MLML…GLVI).

It belongs to the OXA1/ALB3/YidC family. Type 1 subfamily. As to quaternary structure, interacts with the Sec translocase complex via SecD. Specifically interacts with transmembrane segments of nascent integral membrane proteins during membrane integration.

It localises to the cell inner membrane. Required for the insertion and/or proper folding and/or complex formation of integral membrane proteins into the membrane. Involved in integration of membrane proteins that insert both dependently and independently of the Sec translocase complex, as well as at least some lipoproteins. Aids folding of multispanning membrane proteins. The polypeptide is Membrane protein insertase YidC (Citrifermentans bemidjiense (strain ATCC BAA-1014 / DSM 16622 / JCM 12645 / Bem) (Geobacter bemidjiensis)).